Reading from the N-terminus, the 303-residue chain is tRNA dimethylallyltransferase (303 aa).

9–16 (GPTAVGKT) contacts ATP. Substrate is bound at residue 11–16 (TAVGKT). Residues 34 to 37 (DSRQ) are interaction with substrate tRNA.

It belongs to the IPP transferase family. Monomer. Requires Mg(2+) as cofactor.

It catalyses the reaction adenosine(37) in tRNA + dimethylallyl diphosphate = N(6)-dimethylallyladenosine(37) in tRNA + diphosphate. Catalyzes the transfer of a dimethylallyl group onto the adenine at position 37 in tRNAs that read codons beginning with uridine, leading to the formation of N6-(dimethylallyl)adenosine (i(6)A). The protein is tRNA dimethylallyltransferase of Petrotoga mobilis (strain DSM 10674 / SJ95).